The following is a 176-amino-acid chain: ATP synthase subunit b, chloroplastic (176 aa).

The chain crosses the membrane as a helical span at residues 27–49 (ILNLAAVFALLAYVGTDFVSSLL).

The protein belongs to the ATPase B chain family. In terms of assembly, F-type ATPases have 2 components, F(1) - the catalytic core - and F(0) - the membrane proton channel. F(1) has five subunits: alpha(3), beta(3), gamma(1), delta(1), epsilon(1). F(0) has four main subunits: a(1), b(1), b'(1) and c(10-14). The alpha and beta chains form an alternating ring which encloses part of the gamma chain. F(1) is attached to F(0) by a central stalk formed by the gamma and epsilon chains, while a peripheral stalk is formed by the delta, b and b' chains.

It is found in the plastid. The protein resides in the chloroplast thylakoid membrane. Its function is as follows. F(1)F(0) ATP synthase produces ATP from ADP in the presence of a proton or sodium gradient. F-type ATPases consist of two structural domains, F(1) containing the extramembraneous catalytic core and F(0) containing the membrane proton channel, linked together by a central stalk and a peripheral stalk. During catalysis, ATP synthesis in the catalytic domain of F(1) is coupled via a rotary mechanism of the central stalk subunits to proton translocation. In terms of biological role, component of the F(0) channel, it forms part of the peripheral stalk, linking F(1) to F(0). This Nephroselmis olivacea (Green alga) protein is ATP synthase subunit b, chloroplastic.